The primary structure comprises 425 residues: Proline--tRNA ligase (425 aa).

It belongs to the class-II aminoacyl-tRNA synthetase family. ProS type 2 subfamily. As to quaternary structure, homodimer.

The protein localises to the cytoplasm. It catalyses the reaction tRNA(Pro) + L-proline + ATP = L-prolyl-tRNA(Pro) + AMP + diphosphate. Catalyzes the attachment of proline to tRNA(Pro) in a two-step reaction: proline is first activated by ATP to form Pro-AMP and then transferred to the acceptor end of tRNA(Pro). This chain is Proline--tRNA ligase, found in Wolbachia sp. subsp. Brugia malayi (strain TRS).